Reading from the N-terminus, the 396-residue chain is ATP-dependent RNA helicase eIF4A (396 aa).

The short motif at tyrosine 22 to glutamine 50 is the Q motif element. Residues isoleucine 53–isoleucine 223 form the Helicase ATP-binding domain. Alanine 66–threonine 73 is a binding site for ATP. The short motif at aspartate 171–aspartate 174 is the DEAD box element. Residues glycine 234 to phenylalanine 395 form the Helicase C-terminal domain.

This sequence belongs to the DEAD box helicase family. eIF4A subfamily. Component of the eIF4F complex, which composition varies with external and internal environmental conditions. It is composed of at least eIF4A, eIF4E and eIF4G.

Its subcellular location is the cytoplasm. It carries out the reaction ATP + H2O = ADP + phosphate + H(+). ATP-dependent RNA helicase which is a subunit of the eIF4F complex involved in cap recognition and is required for mRNA binding to ribosome. In the current model of translation initiation, eIF4A unwinds RNA secondary structures in the 5'-UTR of mRNAs which is necessary to allow efficient binding of the small ribosomal subunit, and subsequent scanning for the initiator codon. This chain is ATP-dependent RNA helicase eIF4A (TIF1), found in Meyerozyma guilliermondii (strain ATCC 6260 / CBS 566 / DSM 6381 / JCM 1539 / NBRC 10279 / NRRL Y-324) (Yeast).